Here is a 310-residue protein sequence, read N- to C-terminus: Acetylglutamate kinase (310 aa).

Substrate-binding positions include 79-80, Arg101, and Asn206; that span reads GG.

It belongs to the acetylglutamate kinase family. ArgB subfamily.

Its subcellular location is the cytoplasm. It carries out the reaction N-acetyl-L-glutamate + ATP = N-acetyl-L-glutamyl 5-phosphate + ADP. The protein operates within amino-acid biosynthesis; L-arginine biosynthesis; N(2)-acetyl-L-ornithine from L-glutamate: step 2/4. Functionally, catalyzes the ATP-dependent phosphorylation of N-acetyl-L-glutamate. In Rhodospirillum rubrum (strain ATCC 11170 / ATH 1.1.1 / DSM 467 / LMG 4362 / NCIMB 8255 / S1), this protein is Acetylglutamate kinase.